Here is a 254-residue protein sequence, read N- to C-terminus: 4-hydroxy-tetrahydrodipicolinate reductase (254 aa).

G7–I12 contributes to the NAD(+) binding site. Residue R35 participates in NADP(+) binding. Residues G91–T93 and A115–M118 each bind NAD(+). The active-site Proton donor/acceptor is H147. H148 is a (S)-2,3,4,5-tetrahydrodipicolinate binding site. The Proton donor role is filled by K151. G157–T158 is a binding site for (S)-2,3,4,5-tetrahydrodipicolinate.

It belongs to the DapB family.

It localises to the cytoplasm. The enzyme catalyses (S)-2,3,4,5-tetrahydrodipicolinate + NAD(+) + H2O = (2S,4S)-4-hydroxy-2,3,4,5-tetrahydrodipicolinate + NADH + H(+). The catalysed reaction is (S)-2,3,4,5-tetrahydrodipicolinate + NADP(+) + H2O = (2S,4S)-4-hydroxy-2,3,4,5-tetrahydrodipicolinate + NADPH + H(+). Its pathway is amino-acid biosynthesis; L-lysine biosynthesis via DAP pathway; (S)-tetrahydrodipicolinate from L-aspartate: step 4/4. In terms of biological role, catalyzes the conversion of 4-hydroxy-tetrahydrodipicolinate (HTPA) to tetrahydrodipicolinate. The protein is 4-hydroxy-tetrahydrodipicolinate reductase of Helicobacter pylori (strain ATCC 700392 / 26695) (Campylobacter pylori).